The following is a 37-amino-acid chain: Large ribosomal subunit protein bL36 (37 aa).

This sequence belongs to the bacterial ribosomal protein bL36 family.

This is Large ribosomal subunit protein bL36 from Campylobacter jejuni subsp. jejuni serotype O:6 (strain 81116 / NCTC 11828).